A 204-amino-acid chain; its full sequence is High frequency lysogenization protein HflD homolog (204 aa).

It belongs to the HflD family.

The protein resides in the cytoplasm. It localises to the cell inner membrane. This chain is High frequency lysogenization protein HflD homolog, found in Ruthia magnifica subsp. Calyptogena magnifica.